The sequence spans 184 residues: Oligoribonuclease (184 aa).

The Exonuclease domain maps to 8–171 (LIWIDLEMTG…DDIRESIAEL (164 aa)). Residue Tyr129 is part of the active site.

It belongs to the oligoribonuclease family.

It localises to the cytoplasm. Its function is as follows. 3'-to-5' exoribonuclease specific for small oligoribonucleotides. The polypeptide is Oligoribonuclease (Pasteurella multocida (strain Pm70)).